Here is a 300-residue protein sequence, read N- to C-terminus: Ankyrin repeat domain-containing protein 54 (300 aa).

Positions 1 to 27 (MAAAAGDADDEPRSGHSSSEGECAVAP) are disordered. The residue at position 2 (Ala-2) is an N-acetylalanine. Phosphoserine occurs at positions 58 and 63. The short motif at 99–117 (RRLGPTGKEVHALKRLRDS) is the Nuclear localization signal (NLS) element. ANK repeat units follow at residues 109-138 (HALKRLRDSANANDVETVQQLLEDGADPCA), 142-171 (KGRTALHFASCNGNDQIVQLLLDHGADPNQ), 175-204 (LGNTPLHLAACTNHVPVITTLLRGGARVDA), and 208-244 (AGRTPLHLAKSKLNILQEGHAQCLEAVRLEVKQIIHM). Residues 141-241 (DKGRTALHFA…EAVRLEVKQI (101 aa)) form an LYN-binding region. A Nuclear export signal (NES) motif is present at residues 283–293 (LLASFTSLSLQ).

As to quaternary structure, interacts (via ankyrin repeat region) with LYN (via SH3-domain) in an activation-independent status of LYN. Forms a multiprotein complex with LYN and HCLS1. Interacts with TSN2, VAV1, DBNL and LASP1.

It is found in the nucleus. It localises to the cytoplasm. Its subcellular location is the midbody. In terms of biological role, plays an important role in regulating intracellular signaling events associated with erythroid terminal differentiation. This chain is Ankyrin repeat domain-containing protein 54 (ANKRD54), found in Homo sapiens (Human).